Consider the following 303-residue polypeptide: Taste receptor type 2 member 13 (303 aa).

Over 1–7 (MESALPS) the chain is Extracellular. The helical transmembrane segment at 8–28 (IFTLVIIAEFIIGNLSNGFIV) threads the bilayer. At 29 to 55 (LINCIDWVSKRELSSVDKLLIILAISR) the chain is on the cytoplasmic side. Residues 56–76 (IGLIWEILVSWFLALHSLAIF) form a helical membrane-spanning segment. The Extracellular portion of the chain corresponds to 77 to 85 (VSGTGLRIM). The helical transmembrane segment at 86 to 106 (IFSWIVSNHFNLWLATILSIF) threads the bilayer. The Cytoplasmic portion of the chain corresponds to 107 to 128 (YLLKIASFSSPAFLYLKRRVNK). Residues 129–149 (VILMILLGTLVFLFLNLIQIN) traverse the membrane as a helical segment. At 150–184 (MLIKDWLDRYERNTTWNFSMSDFETFSVSVRFTMT) the chain is on the extracellular side. N-linked (GlcNAc...) asparagine glycosylation is found at Asn-162 and Asn-166. A helical membrane pass occupies residues 185–205 (MFSLTPFTVAFISFLLLVFSL). The Cytoplasmic portion of the chain corresponds to 206 to 232 (QKHLQKMQLNYKGHRDPRTKVHTNALK). Residues 233 to 253 (IVISFLLFYASFFLSILISWI) traverse the membrane as a helical segment. Residues 254–261 (SELYQNTV) lie on the Extracellular side of the membrane. A helical transmembrane segment spans residues 262–282 (IYMLCETIGAFYPSSHSFLLI). Topologically, residues 283-303 (LGNAKLRQAFLLVAAKVWAKR) are cytoplasmic.

The protein belongs to the G-protein coupled receptor T2R family.

It is found in the membrane. Receptor that may play a role in the perception of bitterness and is gustducin-linked. May play a role in sensing the chemical composition of the gastrointestinal content. The activity of this receptor may stimulate alpha gustducin, mediate PLC-beta-2 activation and lead to the gating of TRPM5. The protein is Taste receptor type 2 member 13 (TAS2R13) of Pan paniscus (Pygmy chimpanzee).